We begin with the raw amino-acid sequence, 109 residues long: Parvalbumin beta 2 (109 aa).

Ala-2 is modified (N-acetylalanine). 2 consecutive EF-hand domains span residues 39 to 74 (KSPA…FSAG) and 78 to 109 (LSDA…MIKA). Asp-52, Asp-54, Ser-56, Phe-58, Glu-60, Glu-63, Asp-91, Asp-93, Asp-95, Lys-97, and Glu-102 together coordinate Ca(2+).

This sequence belongs to the parvalbumin family. As to quaternary structure, monomer.

In muscle, parvalbumin is thought to be involved in relaxation after contraction. It binds two calcium ions. This is Parvalbumin beta 2 from Gadus morhua (Atlantic cod).